A 396-amino-acid polypeptide reads, in one-letter code: F-box protein At2g21930 (396 aa).

In terms of domain architecture, F-box spans 19–65; that stretch reads SGNSVQIPFDLIPEILKRLPVKTLARFLSVSKEYTSIIRNRDFMKSY.

The polypeptide is F-box protein At2g21930 (Arabidopsis thaliana (Mouse-ear cress)).